Reading from the N-terminus, the 319-residue chain is Cell surface A33 antigen (319 aa).

The N-terminal stretch at 1–21 (MVGKMWPVLWTLCAVRVTVDA) is a signal peptide. Positions 22–134 (ISVETPQDVL…LEGNTKSRVR (113 aa)) constitute an Ig-like V-type domain. Residues 22 to 235 (ISVETPQDVL…VAVRSPSMNV (214 aa)) lie on the Extracellular side of the membrane. 3 disulfide bridges follow: Cys43–Cys117, Cys146–Cys222, and Cys162–Cys211. 3 N-linked (GlcNAc...) asparagine glycosylation sites follow: Asn112, Asn200, and Asn223. The Ig-like C2-type domain occupies 140–227 (PPSKPECGIE…GTQFCNITVA (88 aa)). The chain crosses the membrane as a helical span at residues 236–256 (ALYVGIAVGVVAALIIIGIII). Residues 257–319 (YCCCCRGKDD…GRESPDHLDQ (63 aa)) are Cytoplasmic-facing. 2 stretches are compositionally biased toward basic and acidic residues: residues 267-295 (NTED…SRER) and 303-319 (QEEQ…HLDQ). The interval 267–319 (NTEDKEDARPNREAYEEPPEQLRELSREREEEDDYRQEEQRSTGRESPDHLDQ) is disordered.

In terms of processing, N-glycosylated, contains approximately 8 kDa of N-linked carbohydrate. Palmitoylated. Expressed in normal gastrointestinal epithelium and in 95% of colon cancers.

It localises to the membrane. Functionally, may play a role in cell-cell recognition and signaling. The sequence is that of Cell surface A33 antigen (GPA33) from Homo sapiens (Human).